The primary structure comprises 439 residues: tRNA-2-methylthio-N(6)-dimethylallyladenosine synthase (439 aa).

Residues 2-119 (KYIYIKTWGC…LPKMIDEVEK (118 aa)) form the MTTase N-terminal domain. Positions 11, 48, 82, 156, 160, and 163 each coordinate [4Fe-4S] cluster. A Radical SAM core domain is found at 142–374 (KKKGYTADIS…QERINIQTML (233 aa)). The 63-residue stretch at 377–439 (RKMFGSIQSV…HTHSLKGELF (63 aa)) folds into the TRAM domain.

Belongs to the methylthiotransferase family. MiaB subfamily. Monomer. [4Fe-4S] cluster serves as cofactor.

It is found in the cytoplasm. It catalyses the reaction N(6)-dimethylallyladenosine(37) in tRNA + (sulfur carrier)-SH + AH2 + 2 S-adenosyl-L-methionine = 2-methylsulfanyl-N(6)-dimethylallyladenosine(37) in tRNA + (sulfur carrier)-H + 5'-deoxyadenosine + L-methionine + A + S-adenosyl-L-homocysteine + 2 H(+). Catalyzes the methylthiolation of N6-(dimethylallyl)adenosine (i(6)A), leading to the formation of 2-methylthio-N6-(dimethylallyl)adenosine (ms(2)i(6)A) at position 37 in tRNAs that read codons beginning with uridine. This chain is tRNA-2-methylthio-N(6)-dimethylallyladenosine synthase, found in Buchnera aphidicola subsp. Acyrthosiphon pisum (strain APS) (Acyrthosiphon pisum symbiotic bacterium).